Consider the following 159-residue polypeptide: Crossover junction endodeoxyribonuclease RuvC (159 aa).

Catalysis depends on residues aspartate 7, glutamate 67, and aspartate 139. Mg(2+) contacts are provided by aspartate 7, glutamate 67, and aspartate 139.

This sequence belongs to the RuvC family. As to quaternary structure, homodimer which binds Holliday junction (HJ) DNA. The HJ becomes 2-fold symmetrical on binding to RuvC with unstacked arms; it has a different conformation from HJ DNA in complex with RuvA. In the full resolvosome a probable DNA-RuvA(4)-RuvB(12)-RuvC(2) complex forms which resolves the HJ. Mg(2+) serves as cofactor.

It is found in the cytoplasm. The catalysed reaction is Endonucleolytic cleavage at a junction such as a reciprocal single-stranded crossover between two homologous DNA duplexes (Holliday junction).. Functionally, the RuvA-RuvB-RuvC complex processes Holliday junction (HJ) DNA during genetic recombination and DNA repair. Endonuclease that resolves HJ intermediates. Cleaves cruciform DNA by making single-stranded nicks across the HJ at symmetrical positions within the homologous arms, yielding a 5'-phosphate and a 3'-hydroxyl group; requires a central core of homology in the junction. The consensus cleavage sequence is 5'-(A/T)TT(C/G)-3'. Cleavage occurs on the 3'-side of the TT dinucleotide at the point of strand exchange. HJ branch migration catalyzed by RuvA-RuvB allows RuvC to scan DNA until it finds its consensus sequence, where it cleaves and resolves the cruciform DNA. The sequence is that of Crossover junction endodeoxyribonuclease RuvC from Thermosynechococcus vestitus (strain NIES-2133 / IAM M-273 / BP-1).